We begin with the raw amino-acid sequence, 305 residues long: Glyceraldehyde-3-phosphate dehydrogenase 2, cytosolic (305 aa).

Asp3 and Arg50 together coordinate NAD(+). D-glyceraldehyde 3-phosphate is bound by residues 121–123 (SCT), Thr152, 181–182 (TG), and Arg204. Cys122 functions as the Nucleophile in the catalytic mechanism. Asn286 is an NAD(+) binding site.

Belongs to the glyceraldehyde-3-phosphate dehydrogenase family. As to quaternary structure, homotetramer.

The protein resides in the cytoplasm. It catalyses the reaction D-glyceraldehyde 3-phosphate + phosphate + NAD(+) = (2R)-3-phospho-glyceroyl phosphate + NADH + H(+). It functions in the pathway carbohydrate degradation; glycolysis; pyruvate from D-glyceraldehyde 3-phosphate: step 1/5. Functionally, key enzyme in glycolysis that catalyzes the first step of the pathway by converting D-glyceraldehyde 3-phosphate (G3P) into 3-phospho-D-glyceroyl phosphate. Essential for the maintenance of cellular ATP levels and carbohydrate metabolism. The polypeptide is Glyceraldehyde-3-phosphate dehydrogenase 2, cytosolic (GAPC) (Hordeum vulgare (Barley)).